The chain runs to 263 residues: Phosphatidylglycerol--prolipoprotein diacylglyceryl transferase (263 aa).

Transmembrane regions (helical) follow at residues 7–27 (IFSIGPVSIHWYSLAYVLGIV), 50–70 (LLTATIIGIILGGRLGFVLIY), 85–105 (TWKGGMSFHGGAIGVLCAVII), and 112–132 (IPIFYTLDLISCGVPIGLFLG). Arg-133 provides a ligand contact to a 1,2-diacyl-sn-glycero-3-phospho-(1'-sn-glycerol). The next 3 membrane-spanning stretches (helical) occupy residues 169–189 (LYEAFFEGLLFFAIANSLFFL), 197–217 (GTLTGIAVIWYGTVRFVVEFF), and 233–253 (MGQLLSIFMTLLGIIVYLSAL).

Belongs to the Lgt family.

It localises to the cell membrane. The enzyme catalyses L-cysteinyl-[prolipoprotein] + a 1,2-diacyl-sn-glycero-3-phospho-(1'-sn-glycerol) = an S-1,2-diacyl-sn-glyceryl-L-cysteinyl-[prolipoprotein] + sn-glycerol 1-phosphate + H(+). The protein operates within protein modification; lipoprotein biosynthesis (diacylglyceryl transfer). Its function is as follows. Catalyzes the transfer of the diacylglyceryl group from phosphatidylglycerol to the sulfhydryl group of the N-terminal cysteine of a prolipoprotein, the first step in the formation of mature lipoproteins. This Wolbachia sp. subsp. Brugia malayi (strain TRS) protein is Phosphatidylglycerol--prolipoprotein diacylglyceryl transferase.